Consider the following 492-residue polypeptide: Beta-Ala-His dipeptidase (492 aa).

Histidine 107 is a Zn(2+) binding site. The active site involves aspartate 109. Aspartate 140 is a Zn(2+) binding site. Glutamate 174 functions as the Proton acceptor in the catalytic mechanism. Zn(2+) is bound at residue glutamate 175. Serine 194 bears the Phosphoserine mark. 2 residues coordinate Zn(2+): aspartate 203 and histidine 453.

The protein belongs to the peptidase M20A family. As to quaternary structure, homodimer. Zn(2+) is required as a cofactor. As to expression, detected exclusively in kidney.

It is found in the secreted. It catalyses the reaction Preferential hydrolysis of the beta-Ala-|-His dipeptide (carnosine), and also anserine, Xaa-|-His dipeptides and other dipeptides including homocarnosine.. The catalysed reaction is carnosine + H2O = beta-alanine + L-histidine. The enzyme catalyses anserine + H2O = N(pros)-methyl-L-histidine + beta-alanine. It carries out the reaction L-alanyl-L-histidine + H2O = L-histidine + L-alanine. It catalyses the reaction glycyl-L-histidine + H2O = L-histidine + glycine. The catalysed reaction is L-homocarnosine + H2O = 4-aminobutanoate + L-histidine. Catalyzes the peptide bond hydrolysis in Xaa-His dipeptides, displaying the highest activity toward carnosine (beta-alanyl-L-histidine) and anserine (beta-alanyl-3-methyl-histidine). This is Beta-Ala-His dipeptidase (Cndp1) from Mus musculus (Mouse).